Consider the following 311-residue polypeptide: Ribosomal RNA small subunit methyltransferase H (311 aa).

S-adenosyl-L-methionine is bound by residues 32 to 34 (AGH), aspartate 52, phenylalanine 79, aspartate 100, and glutamine 107.

Belongs to the methyltransferase superfamily. RsmH family.

The protein localises to the cytoplasm. It catalyses the reaction cytidine(1402) in 16S rRNA + S-adenosyl-L-methionine = N(4)-methylcytidine(1402) in 16S rRNA + S-adenosyl-L-homocysteine + H(+). Functionally, specifically methylates the N4 position of cytidine in position 1402 (C1402) of 16S rRNA. The polypeptide is Ribosomal RNA small subunit methyltransferase H (Staphylococcus aureus (strain COL)).